A 242-amino-acid chain; its full sequence is NAD-dependent protein deacylase 1 (242 aa).

The Deacetylase sirtuin-type domain occupies 1–242 (MDFKILKEKL…FAMKFEEKEG (242 aa)). 21–40 (GAGISKESGIPTFRGEDGLW) is a binding site for NAD(+). 2 residues coordinate substrate: Tyr65 and Arg68. 99 to 102 (QNVD) is an NAD(+) binding site. His117 functions as the Proton acceptor in the catalytic mechanism. Residues Cys125, Cys128, Cys146, and Cys149 each coordinate Zn(2+). NAD(+) is bound by residues 186-188 (GTS) and Glu241.

The protein belongs to the sirtuin family. Class III subfamily. The cofactor is Zn(2+).

The protein resides in the cytoplasm. It carries out the reaction N(6)-acetyl-L-lysyl-[protein] + NAD(+) + H2O = 2''-O-acetyl-ADP-D-ribose + nicotinamide + L-lysyl-[protein]. The catalysed reaction is N(6)-succinyl-L-lysyl-[protein] + NAD(+) + H2O = 2''-O-succinyl-ADP-D-ribose + nicotinamide + L-lysyl-[protein]. NAD-dependent lysine deacetylase and desuccinylase that specifically removes acetyl and succinyl groups on target proteins. Modulates the activities of several proteins which are inactive in their acylated form. In Caldanaerobacter subterraneus subsp. tengcongensis (strain DSM 15242 / JCM 11007 / NBRC 100824 / MB4) (Thermoanaerobacter tengcongensis), this protein is NAD-dependent protein deacylase 1.